The primary structure comprises 730 residues: Ribosomal RNA large subunit methyltransferase K/L (730 aa).

Residues 46 to 157 form the THUMP domain; sequence TAYRLCLWSR…RGEAILSLDL (112 aa). The span at 399–408 shows a compositional bias: basic and acidic residues; the sequence is AAVEEGEPRR. Positions 399-418 are disordered; sequence AAVEEGEPRRQAPVASEPAR.

It belongs to the methyltransferase superfamily. RlmKL family.

The protein localises to the cytoplasm. It carries out the reaction guanosine(2445) in 23S rRNA + S-adenosyl-L-methionine = N(2)-methylguanosine(2445) in 23S rRNA + S-adenosyl-L-homocysteine + H(+). The catalysed reaction is guanosine(2069) in 23S rRNA + S-adenosyl-L-methionine = N(2)-methylguanosine(2069) in 23S rRNA + S-adenosyl-L-homocysteine + H(+). Its function is as follows. Specifically methylates the guanine in position 2445 (m2G2445) and the guanine in position 2069 (m7G2069) of 23S rRNA. The polypeptide is Ribosomal RNA large subunit methyltransferase K/L (Pseudomonas entomophila (strain L48)).